A 526-amino-acid chain; its full sequence is Glutamyl-tRNA(Gln) amidotransferase subunit A, mitochondrial (526 aa).

Catalysis depends on charge relay system residues lysine 76 and serine 171. Residue serine 195 is the Acyl-ester intermediate of the active site.

Belongs to the amidase family. GatA subfamily. Subunit of the heterotrimeric GatCAB amidotransferase (AdT) complex, composed of A (QRSL1), B (GATB) and C (GATC) subunits.

Its subcellular location is the mitochondrion. It carries out the reaction L-glutamyl-tRNA(Gln) + L-glutamine + ATP + H2O = L-glutaminyl-tRNA(Gln) + L-glutamate + ADP + phosphate + H(+). In terms of biological role, allows the formation of correctly charged Gln-tRNA(Gln) through the transamidation of misacylated Glu-tRNA(Gln) in the mitochondria. The reaction takes place in the presence of glutamine and ATP through an activated gamma-phospho-Glu-tRNA(Gln). The chain is Glutamyl-tRNA(Gln) amidotransferase subunit A, mitochondrial from Canis lupus familiaris (Dog).